Consider the following 478-residue polypeptide: Cytochrome c-552 (478 aa).

The first 26 residues, 1–26 (MARKTLRARRFFSLIFPFFFITSVYA), serve as a signal peptide directing secretion. Histidine 94 contacts heme c. Cysteine 122, cysteine 125, and lysine 126 together coordinate heme. Heme c is bound by residues cysteine 160, cysteine 163, histidine 164, cysteine 209, cysteine 212, and histidine 213. The Ca(2+) site is built by glutamate 215, tyrosine 216, lysine 261, and glutamine 263. Tyrosine 216 serves as a coordination point for substrate. Histidine 264 is a substrate binding site. Residues histidine 275, cysteine 282, cysteine 285, histidine 286, histidine 301, cysteine 314, cysteine 317, histidine 318, and histidine 393 each coordinate heme c.

This sequence belongs to the cytochrome c-552 family. The cofactor is Ca(2+). Requires heme c as cofactor.

It localises to the periplasm. The enzyme catalyses 6 Fe(III)-[cytochrome c] + NH4(+) + 2 H2O = 6 Fe(II)-[cytochrome c] + nitrite + 8 H(+). Its pathway is nitrogen metabolism; nitrate reduction (assimilation). Catalyzes the reduction of nitrite to ammonia, consuming six electrons in the process. This is Cytochrome c-552 from Salmonella agona (strain SL483).